Consider the following 144-residue polypeptide: Large ribosomal subunit protein uL15 (144 aa).

Residues 1 to 57 are disordered; the sequence is MRFNELQPAKGSRFAGKRLGRGIGSGLGKTSGKGHKGQKARSGGYHKVGFEGGQMPL. Positions 21–31 are enriched in gly residues; sequence RGIGSGLGKTS.

The protein belongs to the universal ribosomal protein uL15 family. In terms of assembly, part of the 50S ribosomal subunit.

Binds to the 23S rRNA. The chain is Large ribosomal subunit protein uL15 from Dichelobacter nodosus (strain VCS1703A).